The primary structure comprises 428 residues: Chaperone SurA (428 aa).

An N-terminal signal peptide occupies residues 1 to 19 (MNIWKTLLLGMLVTGSAVS). PpiC domains are found at residues 170-268 (SVEY…KIED) and 277-377 (VTEV…EVLD).

It is found in the periplasm. It carries out the reaction [protein]-peptidylproline (omega=180) = [protein]-peptidylproline (omega=0). Functionally, chaperone involved in the correct folding and assembly of outer membrane proteins. Recognizes specific patterns of aromatic residues and the orientation of their side chains, which are found more frequently in integral outer membrane proteins. May act in both early periplasmic and late outer membrane-associated steps of protein maturation. In Vibrio vulnificus (strain YJ016), this protein is Chaperone SurA.